Reading from the N-terminus, the 119-residue chain is Large ribosomal subunit protein bL20c (119 aa).

It belongs to the bacterial ribosomal protein bL20 family.

It localises to the plastid. It is found in the chloroplast. Its function is as follows. Binds directly to 23S ribosomal RNA and is necessary for the in vitro assembly process of the 50S ribosomal subunit. It is not involved in the protein synthesizing functions of that subunit. In Oryza sativa (Rice), this protein is Large ribosomal subunit protein bL20c (rpl20).